A 698-amino-acid polypeptide reads, in one-letter code: DNA ligase (698 aa).

NAD(+)-binding positions include aspartate 35 to aspartate 39, serine 84 to leucine 85, and glutamate 123. Lysine 125 functions as the N6-AMP-lysine intermediate in the catalytic mechanism. Arginine 146, glutamate 183, lysine 302, and lysine 326 together coordinate NAD(+). Zn(2+) is bound by residues cysteine 420, cysteine 423, cysteine 438, and cysteine 443. The BRCT domain occupies asparagine 612–leucine 698.

The protein belongs to the NAD-dependent DNA ligase family. LigA subfamily. It depends on Mg(2+) as a cofactor. Requires Mn(2+) as cofactor.

The catalysed reaction is NAD(+) + (deoxyribonucleotide)n-3'-hydroxyl + 5'-phospho-(deoxyribonucleotide)m = (deoxyribonucleotide)n+m + AMP + beta-nicotinamide D-nucleotide.. DNA ligase that catalyzes the formation of phosphodiester linkages between 5'-phosphoryl and 3'-hydroxyl groups in double-stranded DNA using NAD as a coenzyme and as the energy source for the reaction. It is essential for DNA replication and repair of damaged DNA. This Synechococcus sp. (strain WH7803) protein is DNA ligase.